Here is a 205-residue protein sequence, read N- to C-terminus: GTP cyclohydrolase 1 (205 aa).

Zn(2+)-binding residues include Cys-95, His-98, and Cys-166.

It belongs to the GTP cyclohydrolase I family. In terms of assembly, toroid-shaped homodecamer, composed of two pentamers of five dimers.

It carries out the reaction GTP + H2O = 7,8-dihydroneopterin 3'-triphosphate + formate + H(+). The protein operates within cofactor biosynthesis; 7,8-dihydroneopterin triphosphate biosynthesis; 7,8-dihydroneopterin triphosphate from GTP: step 1/1. The chain is GTP cyclohydrolase 1 from Maricaulis maris (strain MCS10) (Caulobacter maris).